Consider the following 471-residue polypeptide: Probable ribonuclease FAU-1 (471 aa).

It belongs to the FAU-1 family.

In terms of biological role, probable RNase involved in rRNA stability through maturation and/or degradation of precursor rRNAs. Preferentially cleaves UA sequences in the 5' precursor region of 5S rRNA. Binds to RNA in loop regions with AU-rich sequences. This chain is Probable ribonuclease FAU-1, found in Thermococcus kodakarensis (strain ATCC BAA-918 / JCM 12380 / KOD1) (Pyrococcus kodakaraensis (strain KOD1)).